Here is a 233-residue protein sequence, read N- to C-terminus: MSKTAKKLAAASEKIDRTKVYPVAAAIDVVKQAAYAKFDETVDVAVRLGVDPRHADQMVRGAVVLPNGLGKDVRVLVFAKGEKEKEALDAGADYVGAEDLVSKIQEGWFEFDTAIATPDMMGVVGKIGKLLGPRGLMPNPKVGTVTFEVSRAVKESKAGKVEFRVEKAGIVHAPVGKVSFDADSLKGNLLALVEALVKAKPSAAKGIYIKKISMSSTMGPGINLDIADVTSQI.

It belongs to the universal ribosomal protein uL1 family. Part of the 50S ribosomal subunit.

Functionally, binds directly to 23S rRNA. The L1 stalk is quite mobile in the ribosome, and is involved in E site tRNA release. In terms of biological role, protein L1 is also a translational repressor protein, it controls the translation of the L11 operon by binding to its mRNA. The polypeptide is Large ribosomal subunit protein uL1 (Pelobacter propionicus (strain DSM 2379 / NBRC 103807 / OttBd1)).